Reading from the N-terminus, the 146-residue chain is Anti-sigma F factor (146 aa).

The protein belongs to the anti-sigma-factor family.

It catalyses the reaction L-seryl-[protein] + ATP = O-phospho-L-seryl-[protein] + ADP + H(+). It carries out the reaction L-threonyl-[protein] + ATP = O-phospho-L-threonyl-[protein] + ADP + H(+). In terms of biological role, binds to sigma F and blocks its ability to form an RNA polymerase holoenzyme (E-sigma F). Phosphorylates SpoIIAA on a serine residue. This phosphorylation may enable SpoIIAA to act as an anti-anti-sigma factor that counteracts SpoIIAB and thus releases sigma F from inhibition. This chain is Anti-sigma F factor, found in Bacillus cereus (strain ATCC 14579 / DSM 31 / CCUG 7414 / JCM 2152 / NBRC 15305 / NCIMB 9373 / NCTC 2599 / NRRL B-3711).